The primary structure comprises 37 residues: Natriuretic peptide PNP (37 aa).

A disulfide bond links cysteine 14 and cysteine 30.

As to expression, expressed by the venom gland.

Its subcellular location is the secreted. Its function is as follows. Increases urine flow and decreases blood pressure when administered to rats by intravenous injection. Inhibits thrombin-induced platelet aggregation. Stimulates cGMP production via the natriuretic peptide receptor-A (NPR1). This chain is Natriuretic peptide PNP, found in Pseudocerastes persicus (Persian horned viper).